Consider the following 247-residue polypeptide: VQ motif-containing protein 4 (247 aa).

Residues 1 to 128 (MENSPRYREA…SSSSASGFRL (128 aa)) are disordered. Position 16 is a phosphoserine (Ser-16). Positions 21-37 (NSNNSCGMSSSSESNKP) are enriched in low complexity. Polar residues-rich tracts occupy residues 48–75 (RSES…QMLT) and 87–106 (LKPN…SSFS). The VQ signature appears at 67-76 (FKQVVQMLTG). Residues Ser-106, Ser-155, Ser-163, Ser-165, and Ser-175 each carry the phosphoserine modification. Thr-178 is subject to Phosphothreonine. Positions 184–247 (PFDRSGSSNQ…VSGSSSASTS (64 aa)) are disordered. Residue Ser-194 is modified to Phosphoserine. Residues 200–210 (AEEKAMKERGF) are compositionally biased toward basic and acidic residues. Ser-215 is modified (phosphoserine). A phosphothreonine mark is found at Thr-219 and Thr-234. Ser-235, Ser-239, and Ser-243 each carry phosphoserine. The segment covering 236–247 (PRVSGSSSASTS) has biased composition (polar residues).

Interacts with MPK3 and MPK6. Post-translationally, phosphorylated on serine and threonine residues by MPK6 following treatment with the pathogen-associated molecular pattern (PAMP) flg22. MAP kinase-mediated phosphorylation after PAMP elicitation causes degradation of VQ4, allowing WRKY33 to promote transcription from defense genes.

It localises to the nucleus. Its function is as follows. Acts as a negative regulator of WRKY33 transcription factor activity in the promotion of defense gene expression. Acts as a negative regulator of pathogen-associated molecular pattern (PAMP)-induced responses to modulate resistance to pathogens. The chain is VQ motif-containing protein 4 from Arabidopsis thaliana (Mouse-ear cress).